The primary structure comprises 311 residues: GTP cyclohydrolase MptA (311 aa).

The protein belongs to the GTP cyclohydrolase IV family. As to quaternary structure, homodimer. It depends on Fe(2+) as a cofactor.

The enzyme catalyses GTP + H2O = 7,8-dihydroneopterin 2',3'-cyclic phosphate + formate + diphosphate + H(+). It participates in cofactor biosynthesis; 5,6,7,8-tetrahydromethanopterin biosynthesis. Functionally, converts GTP to 7,8-dihydro-D-neopterin 2',3'-cyclic phosphate, the first intermediate in the biosynthesis of coenzyme methanopterin. The sequence is that of GTP cyclohydrolase MptA from Methanocorpusculum labreanum (strain ATCC 43576 / DSM 4855 / Z).